The following is a 408-amino-acid chain: Metacaspase-1B (408 aa).

The disordered stretch occupies residues 1–98; it reads MYHRHSAPPP…PPLEAQQFGN (98 aa). Composition is skewed to pro residues over residues 24–49 and 56–66; these read WPPPQPYEYPPYPPQGPPPAHTFPPP and SPYPTPPPHSP. Catalysis depends on residues histidine 199 and cysteine 255.

The protein belongs to the peptidase C14B family.

Its function is as follows. Involved in cell death (apoptosis). Required for the apoptotic-like loss of membrane phospholipid asymmetry at stationary phase and facilitates growth under conditions of endoplasmic reticulum stress. This chain is Metacaspase-1B (casB), found in Aspergillus fumigatus (strain CBS 144.89 / FGSC A1163 / CEA10) (Neosartorya fumigata).